Here is a 380-residue protein sequence, read N- to C-terminus: S-adenosylmethionine synthase (380 aa).

H15 contacts ATP. Mg(2+) is bound at residue D17. Residue E43 participates in K(+) binding. L-methionine is bound by residues E56 and Q99. The flexible loop stretch occupies residues 99–109; sequence QSPDIAMGIDN. ATP-binding positions include 164–166, 230–231, D239, 245–246, and K266; these read DAK, RF, and RK. D239 lines the L-methionine pocket. K270 is a binding site for L-methionine.

Belongs to the AdoMet synthase family. In terms of assembly, homotetramer; dimer of dimers. Requires Mg(2+) as cofactor. K(+) is required as a cofactor.

It is found in the cytoplasm. It catalyses the reaction L-methionine + ATP + H2O = S-adenosyl-L-methionine + phosphate + diphosphate. The protein operates within amino-acid biosynthesis; S-adenosyl-L-methionine biosynthesis; S-adenosyl-L-methionine from L-methionine: step 1/1. Catalyzes the formation of S-adenosylmethionine (AdoMet) from methionine and ATP. The overall synthetic reaction is composed of two sequential steps, AdoMet formation and the subsequent tripolyphosphate hydrolysis which occurs prior to release of AdoMet from the enzyme. The protein is S-adenosylmethionine synthase of Rickettsia prowazekii (strain Madrid E).